A 355-amino-acid chain; its full sequence is 12-oxophytodienoate reductase-like protein (355 aa).

Residues 30–32 (ALT), A63, and Q105 each bind FMN. 175–178 (NASS) contacts substrate. Y181 functions as the Proton donor in the catalytic mechanism. R265 is a binding site for substrate. Residues G288 and 309–310 (GR) each bind FMN.

It belongs to the NADH:flavin oxidoreductase/NADH oxidase family. Requires FMN as cofactor. In terms of tissue distribution, weakly expressed in flowers and roots.

Its subcellular location is the cytoplasm. May be involved in the biosynthesis or metabolism of oxylipin signaling molecules. This is 12-oxophytodienoate reductase-like protein (OPR2) from Solanum lycopersicum (Tomato).